Reading from the N-terminus, the 201-residue chain is UPF0301 protein Smed_0532 (201 aa).

The protein belongs to the UPF0301 (AlgH) family.

The sequence is that of UPF0301 protein Smed_0532 from Sinorhizobium medicae (strain WSM419) (Ensifer medicae).